Reading from the N-terminus, the 1233-residue chain is MYRIGSSIKKSNQIRLATIRTTTNVVIRNYCSETSSTQPPPPEQGQETPKPIIKKKKQSREIFSEFVDDGDVVVDHRKHSQKKAVVDQRTQDFDKMLASLTMKDLKLMRYSDNPETFELFSREHFNINDAFEMNLTTKSLLQKQKEKEQKELPGSLFKTQKVIYDNYSQIKSDHIANELNKFKEEFEKPLVSAYNEVINQSNLLYRTKRAEERLIKKRIEKERKEYKLSGLEKHYRDIVQVRNALDFRGKTILAGSDEEDAWQRILERSEITDPHNLSRLHMMDEYNDLGYQTEITEDYINQLSIVPFDFANPASYSSMVNLIDQLVQVDTYRDPEEIASLLVAEKLRAIKKANDQGTEEGKKLSKLLQSQLILELKADRYLETYECTLPELPTPEEIKKFTIDELKELEIVRMAATRLEQYQEAKNRIHILEDNTKQDKIDNYKFYQQMNAPSVANSRDATNLLTVGEMSLKAGTRPSTEDEIIDLLPHDEEVREEHEDDLVDDEKVVATTNEEEPSQEVEESEPVPDIEDPFAINKDFFDKNGRFLLSDKIEAEEQEQEDLIKDDDVAIENVESLITEESVPIAVEESVTTVVEESVTKPPKFLERFAEKGKLPPIRNSNKDSVRQIAESLFNINFDYQEELDEIDGRMDAIDAFHENQEELPLDEREGELDEDIVRPLPSTLPDLKALSAKIRKNEEESLNMIANKYINQEVNEKTATEVLDQIYEAYKTNNLFDKDIIEHDKNTIREANGDVAIPESMYFEYDTTFSDLVDRDVIFKMPLKDTDLVRVLTHQLTETGLLKQEKVLKHNTDDMPVSKELVESNPDAFPDFVKEIIDQNPNDSTDMPITREYIETYDPLIKEFREKMSITKNKDGSVVEEVIEEELIKDENEEEEDEDEEDEGDNKQRVIERSDEVHDEIYDERRLYINLRPQIKDEGVISVPTSTKKITKPIEKDGIDNNDGWLMGKPFNMLNYRLNNQPNKLPMDNVQSEGERVPGEDEPDILVEELADEEDEEFKDLSPSFDQQPKIFEQTDLYYYLQQGKNQEWFRPEKISDKDITSLERRQTWYPRQHIKTYPFEFISSHNTTDQTIEDSWVNRKAVLKVNISAFNLSKTVQDRLAQLTANRYDPQKKVLTLVANNHKTLPENKYEVKRLFKELLHEASLADPNFVSVRTDNYKAPQPQSFVPSQAAKNQTRFNLYRLQGFPLLNNQQRQHMELYSHIRSHLDSTL.

Disordered regions lie at residues Ser-32 to Pro-51, Ala-510 to Asp-529, and Glu-882 to Ser-915. Composition is skewed to acidic residues over residues Asn-513–Asp-529 and Glu-882–Gly-905. The segment covering Asp-906 to Ser-915 has biased composition (basic and acidic residues).

This is an uncharacterized protein from Dictyostelium discoideum (Social amoeba).